The following is a 429-amino-acid chain: Xyloglucan O-acetyltransferase 1 (429 aa).

At 1-20 (MGSPFKDHHHHHHPFSLAKK) the chain is on the cytoplasmic side. A helical; Signal-anchor for type II membrane protein transmembrane segment spans residues 21–41 (LIPWTFYAMIPLVLFRLYFYP). Residues 42-429 (YPLHNITTPI…KWDYESRREE (388 aa)) are Lumenal-facing. N-linked (GlcNAc...) asparagine glycosylation is found at asparagine 46 and asparagine 89. 4 disulfide bridges follow: cysteine 72-cysteine 122, cysteine 93-cysteine 158, cysteine 102-cysteine 402, and cysteine 317-cysteine 398. The GDS motif signature appears at 145–147 (GDS). The active-site Nucleophile is the serine 147. Residues asparagine 189, asparagine 263, and asparagine 351 are each glycosylated (N-linked (GlcNAc...) asparagine). Residue aspartate 397 is the Proton donor of the active site. The short motif at 397 to 400 (DCVH) is the DXXH motif element. The active-site Proton acceptor is histidine 400.

Belongs to the PC-esterase family. TBL subfamily.

Its subcellular location is the golgi apparatus membrane. Functionally, xyloglucan acetyltransferase that catalyzes the acetylation of fucosylated Gal residues on xyloglucan side chains. Predominantly catalyze 6-O-monoacetylation of Gal residues in the Fuc-Gal-Xyl trisaccharide side chains of xyloglucan oligomers. The chain is Xyloglucan O-acetyltransferase 1 from Populus trichocarpa (Western balsam poplar).